Here is a 908-residue protein sequence, read N- to C-terminus: Vacuolar membrane protease (908 aa).

Residues 1–25 (MTSGEEEEGTREQVPVSQPTGTTSI) are disordered. At 1 to 48 (MTSGEEEEGTREQVPVSQPTGTTSIVSTKEKQPNIFIRAIRATFGYRK) the chain is on the cytoplasmic side. Residues 15-25 (PVSQPTGTTSI) show a composition bias toward polar residues. A helical transmembrane segment spans residues 49 to 69 (TSLTLFVLLTIFFTVAFSSYD). At 70 to 381 (NSLDFTIDLP…FSTSVTTLNT (312 aa)) the chain is on the vacuolar side. N-linked (GlcNAc...) asparagine glycosylation is found at N143 and N162. Zn(2+)-binding residues include H176 and D188. E221 functions as the Proton acceptor in the catalytic mechanism. Zn(2+) is bound by residues E222, E247, and H319. An N-linked (GlcNAc...) asparagine glycan is attached at N354. A helical membrane pass occupies residues 382-402 (INMVLIVLFPVLSGPLLFITV). Residues 403 to 411 (RYKKWNIGT) are Cytoplasmic-facing. Residues 412–432 (ANLFSLPLAIVITSLVGAVVV) traverse the membrane as a helical segment. Topologically, residues 433 to 449 (NQGFRLVNEFLPASRPM) are vacuolar. The helical transmembrane segment at 450–470 (LLVTTTTSILLLTYYILLNGI) threads the bilayer. Residues 471-480 (NFVSPSGDQK) lie on the Cytoplasmic side of the membrane. The helical transmembrane segment at 481–501 (LVSIIQISFIYWIALIFVTRG) threads the bilayer. At 502–514 (LSQNAIGDDHTGE) the chain is on the vacuolar side. A helical transmembrane segment spans residues 515-535 (FAFTILFLLEATASLFGLIGW). Residues 536-602 (TFTRSVKEPT…MQHFGYDWSL (67 aa)) lie on the Cytoplasmic side of the membrane. The interval 543 to 584 (EPTGDEEPLLNGRMERYVDGSDDEDDVEEEDDEDQSEEENHQ) is disordered. The span at 562-579 (GSDDEDDVEEEDDEDQSE) shows a compositional bias: acidic residues. The chain crosses the membrane as a helical span at residues 603 to 623 (QFLLIVPISSLVIYNSGWLVI). Over 624 to 638 (DGINKSIQESLVAEN) the chain is Vacuolar. N627 carries an N-linked (GlcNAc...) asparagine glycan. Residues 639 to 659 (FIYLIIQLFSQFWILPILPFV) form a helical membrane-spanning segment. At 660–664 (YKLNR) the chain is on the cytoplasmic side. The chain crosses the membrane as a helical span at residues 665 to 685 (FMVLGLIAFALVGVTLISSVD). Over 686 to 908 (PFNQDNPLKL…LVSLTNRIEV (223 aa)) the chain is Vacuolar. N752 and N764 each carry an N-linked (GlcNAc...) asparagine glycan.

It belongs to the peptidase M28 family. Requires Zn(2+) as cofactor.

Its subcellular location is the vacuole membrane. In terms of biological role, may be involved in vacuolar sorting and osmoregulation. In Candida tropicalis (strain ATCC MYA-3404 / T1) (Yeast), this protein is Vacuolar membrane protease.